A 198-amino-acid chain; its full sequence is ATP-dependent Clp protease proteolytic subunit (198 aa).

The Nucleophile role is filled by Ser101. His126 is an active-site residue.

Belongs to the peptidase S14 family. As to quaternary structure, component of the chloroplastic Clp protease core complex.

The protein resides in the plastid. The protein localises to the chloroplast stroma. It carries out the reaction Hydrolysis of proteins to small peptides in the presence of ATP and magnesium. alpha-casein is the usual test substrate. In the absence of ATP, only oligopeptides shorter than five residues are hydrolyzed (such as succinyl-Leu-Tyr-|-NHMec, and Leu-Tyr-Leu-|-Tyr-Trp, in which cleavage of the -Tyr-|-Leu- and -Tyr-|-Trp bonds also occurs).. Functionally, cleaves peptides in various proteins in a process that requires ATP hydrolysis. Has a chymotrypsin-like activity. Plays a major role in the degradation of misfolded proteins. The sequence is that of ATP-dependent Clp protease proteolytic subunit from Solanum bulbocastanum (Wild potato).